The chain runs to 366 residues: Neutral protease 2 homolog BDBG_02110 (366 aa).

A signal peptide spans 1-19 (MQLSSVLLTAAGLLAPVYS). The propeptide occupies 23–184 (ISIGRRSEGL…RAKIHDHLAQ (162 aa)). N-linked (GlcNAc...) asparagine glycosylation is found at Asn-123 and Asn-192. Cys-272 and Cys-290 are joined by a disulfide. His-314 contacts Zn(2+). Glu-315 is a catalytic residue. His-318 contributes to the Zn(2+) binding site.

The protein belongs to the peptidase M35 family. Requires Zn(2+) as cofactor.

The protein localises to the secreted. It carries out the reaction Preferential cleavage of bonds with hydrophobic residues in P1'. Also 3-Asn-|-Gln-4 and 8-Gly-|-Ser-9 bonds in insulin B chain.. Secreted metalloproteinase that allows assimilation of proteinaceous substrates. Shows high activities on basic nuclear substrates such as histone and protamine. The chain is Neutral protease 2 homolog BDBG_02110 from Blastomyces gilchristii (strain SLH14081) (Blastomyces dermatitidis).